The following is a 160-amino-acid chain: Phosphopantetheine adenylyltransferase (160 aa).

Threonine 9 lines the substrate pocket. Residues 9–10 and histidine 17 contribute to the ATP site; that span reads TF. Positions 41, 73, and 87 each coordinate substrate. ATP is bound by residues 88–90, glutamate 98, and 123–129; these read GLR and YMFISAS.

It belongs to the bacterial CoaD family. Homohexamer. It depends on Mg(2+) as a cofactor.

Its subcellular location is the cytoplasm. It carries out the reaction (R)-4'-phosphopantetheine + ATP + H(+) = 3'-dephospho-CoA + diphosphate. It functions in the pathway cofactor biosynthesis; coenzyme A biosynthesis; CoA from (R)-pantothenate: step 4/5. Its function is as follows. Reversibly transfers an adenylyl group from ATP to 4'-phosphopantetheine, yielding dephospho-CoA (dPCoA) and pyrophosphate. The sequence is that of Phosphopantetheine adenylyltransferase from Thiobacillus denitrificans (strain ATCC 25259 / T1).